Here is a 325-residue protein sequence, read N- to C-terminus: Large ribosomal subunit protein uL1m (325 aa).

The N-terminal 50 residues, 1–50, are a transit peptide targeting the mitochondrion; that stretch reads MAAAVRCMGRALIHHQRHSLSKMVYQTSLCSCSVNIRVPNRHFAAATKSA.

Belongs to the universal ribosomal protein uL1 family. In terms of assembly, component of the mitochondrial large ribosomal subunit (mt-LSU). Mature mammalian 55S mitochondrial ribosomes consist of a small (28S) and a large (39S) subunit. The 28S small subunit contains a 12S ribosomal RNA (12S mt-rRNA) and 30 different proteins. The 39S large subunit contains a 16S rRNA (16S mt-rRNA), a copy of mitochondrial valine transfer RNA (mt-tRNA(Val)), which plays an integral structural role, and 52 different proteins.

It is found in the mitochondrion. The protein is Large ribosomal subunit protein uL1m (MRPL1) of Homo sapiens (Human).